Consider the following 287-residue polypeptide: Large ribosomal subunit protein uL2 (287 aa).

The tract at residues 221–287 (RGSVMNPCDH…SKRSRGGRDS (67 aa)) is disordered. A compositionally biased stretch (basic residues) spans 271 to 287 (LRKRRKTSKRSRGGRDS).

Belongs to the universal ribosomal protein uL2 family. In terms of assembly, part of the 50S ribosomal subunit. Forms a bridge to the 30S subunit in the 70S ribosome.

Its function is as follows. One of the primary rRNA binding proteins. Required for association of the 30S and 50S subunits to form the 70S ribosome, for tRNA binding and peptide bond formation. It has been suggested to have peptidyltransferase activity; this is somewhat controversial. Makes several contacts with the 16S rRNA in the 70S ribosome. This is Large ribosomal subunit protein uL2 from Synechococcus sp. (strain CC9902).